A 96-amino-acid chain; its full sequence is Protein C4 (96 aa).

Gly2 carries N-myristoyl glycine; by host lipidation. Positions 66–96 are disordered; it reads STDDLQGEDSRQPMTLTPRQLTQDVSRRLLM. The span at 77 to 89 shows a compositional bias: polar residues; the sequence is QPMTLTPRQLTQD.

Belongs to the geminiviridae protein AC4/C4 family.

The protein localises to the host cell membrane. Pathogenicity determinant. May act as a suppressor of RNA-mediated gene silencing, also known as post-transcriptional gene silencing (PTGS), a mechanism of plant viral defense that limits the accumulation of viral RNAs. This is Protein C4 from Solanum lycopersicum (Tomato).